The following is a 373-amino-acid chain: UDP-sugar transporter UST74c (373 aa).

The disordered stretch occupies residues 27 to 49 (LEEKMGGSADRSSLLDGSGSKEL). A Phosphoserine modification is found at Ser-50. The next 8 membrane-spanning stretches (helical) occupy residues 89–111 (HFPSFLFLSLGQLTASIVVLGMG), 131–153 (FPLPLIFLGNMMFGLGGTKTLSL), 174–196 (ILGLRPSNAVQVSVYAMIGGALL), 206–225 (MRGYIYVMITNALTASNGVY), 238–260 (YGLMYYNSLFMFLPALALNYVTG), 275–297 (VFVVQFLLSCVMGFILSYSTILC), 302–324 (SALTTTIVGCLKNICVTYLGMFI), and 329–351 (VFSWLNCIGINISVLASLLYTYV).

The protein belongs to the TPT transporter family. SLC35D subfamily.

The protein resides in the golgi apparatus membrane. Involved in the import of UDP-sugars from the cytoplasm into the Golgi lumen. This chain is UDP-sugar transporter UST74c (frc), found in Drosophila melanogaster (Fruit fly).